Reading from the N-terminus, the 370-residue chain is Formate dehydrogenase (370 aa).

The substrate site is built by isoleucine 94 and asparagine 120. NAD(+)-binding positions include 175 to 176, aspartate 196, 231 to 235, threonine 257, aspartate 283, and 312 to 315; these read RI, PLHES, and HMSG.

It belongs to the D-isomer specific 2-hydroxyacid dehydrogenase family. FDH subfamily. In terms of assembly, homodimer.

It localises to the cytoplasm. The enzyme catalyses formate + NAD(+) = CO2 + NADH. Its function is as follows. Catalyzes the NAD(+)-dependent oxidation of formate to carbon dioxide. Formate oxidation is the final step in the methanol oxidation pathway in methylotrophic microorganisms. Has a role in the detoxification of exogenous formate in non-methylotrophic organisms. The polypeptide is Formate dehydrogenase (Chaetomium thermophilum (strain DSM 1495 / CBS 144.50 / IMI 039719) (Thermochaetoides thermophila)).